The following is a 363-amino-acid chain: Ribosomal RNA large subunit methyltransferase M (363 aa).

S-adenosyl-L-methionine contacts are provided by residues Ser194, 227–230 (CPGG), Asp246, Asp266, and Asp284. Lys313 acts as the Proton acceptor in catalysis.

Belongs to the class I-like SAM-binding methyltransferase superfamily. RNA methyltransferase RlmE family. RlmM subfamily. In terms of assembly, monomer.

It is found in the cytoplasm. The enzyme catalyses cytidine(2498) in 23S rRNA + S-adenosyl-L-methionine = 2'-O-methylcytidine(2498) in 23S rRNA + S-adenosyl-L-homocysteine + H(+). Catalyzes the 2'-O-methylation at nucleotide C2498 in 23S rRNA. The sequence is that of Ribosomal RNA large subunit methyltransferase M from Haemophilus influenzae (strain PittEE).